The chain runs to 576 residues: Proline--tRNA ligase (576 aa).

It belongs to the class-II aminoacyl-tRNA synthetase family. ProS type 1 subfamily. As to quaternary structure, homodimer.

Its subcellular location is the cytoplasm. The catalysed reaction is tRNA(Pro) + L-proline + ATP = L-prolyl-tRNA(Pro) + AMP + diphosphate. In terms of biological role, catalyzes the attachment of proline to tRNA(Pro) in a two-step reaction: proline is first activated by ATP to form Pro-AMP and then transferred to the acceptor end of tRNA(Pro). As ProRS can inadvertently accommodate and process non-cognate amino acids such as alanine and cysteine, to avoid such errors it has two additional distinct editing activities against alanine. One activity is designated as 'pretransfer' editing and involves the tRNA(Pro)-independent hydrolysis of activated Ala-AMP. The other activity is designated 'posttransfer' editing and involves deacylation of mischarged Ala-tRNA(Pro). The misacylated Cys-tRNA(Pro) is not edited by ProRS. This is Proline--tRNA ligase from Magnetococcus marinus (strain ATCC BAA-1437 / JCM 17883 / MC-1).